Consider the following 555-residue polypeptide: Glutamine--tRNA ligase (555 aa).

The short motif at 34–44 is the 'HIGH' region element; it reads PEPNGYLHIGH. Residues 35 to 37 and 41 to 47 each bind ATP; these read EPN and HIGHAKS. Aspartate 67 and tyrosine 212 together coordinate L-glutamine. ATP contacts are provided by residues threonine 231, 261 to 262, and 269 to 271; these read RL and MSK. Positions 268-272 match the 'KMSKS' region motif; it reads IMSKR.

It belongs to the class-I aminoacyl-tRNA synthetase family. As to quaternary structure, monomer.

Its subcellular location is the cytoplasm. The catalysed reaction is tRNA(Gln) + L-glutamine + ATP = L-glutaminyl-tRNA(Gln) + AMP + diphosphate. In Yersinia enterocolitica serotype O:8 / biotype 1B (strain NCTC 13174 / 8081), this protein is Glutamine--tRNA ligase.